The primary structure comprises 204 residues: MPSLLLIIFVTELVVQLVNTLGATTINDLLWRIYLTLPTPLSLEFAQQRRKQKEYLAVRHELKATSSQDEFAKWAKLRRQHDKLLEDLEKKKASLEAARTKFDRTLTTTRTVSTRSVQWFLPFWYSKEPMFWLPYGWFPYYVEWFASFPRAPMGSVSIVVWQWACTAVIALMIEAATAALVYVAAKQSQKIRQPVPAQSEKKDS.

Topologically, residues 1-4 (MPSL) are lumenal. Residues 5–24 (LLIIFVTELVVQLVNTLGAT) form a helical membrane-spanning segment. The Cytoplasmic segment spans residues 25–110 (TINDLLWRIY…KFDRTLTTTR (86 aa)). Residues 72–107 (AKWAKLRRQHDKLLEDLEKKKASLEAARTKFDRTLT) are a coiled coil. Residues 111 to 131 (TVSTRSVQWFLPFWYSKEPMF) form a helical membrane-spanning segment. Over 132–155 (WLPYGWFPYYVEWFASFPRAPMGS) the chain is Lumenal. Residues 156 to 172 (VSIVVWQWACTAVIALM) form a helical membrane-spanning segment. The Cytoplasmic portion of the chain corresponds to 173-204 (IEAATAALVYVAAKQSQKIRQPVPAQSEKKDS).

This sequence belongs to the WRB/GET1 family. As to quaternary structure, interacts with GET3.

It localises to the endoplasmic reticulum membrane. Functionally, required for the post-translational delivery of tail-anchored (TA) proteins to the endoplasmic reticulum. Acts as a membrane receptor for soluble GET3, which recognizes and selectively binds the transmembrane domain of TA proteins in the cytosol. The sequence is that of Protein GET1 from Podospora anserina (strain S / ATCC MYA-4624 / DSM 980 / FGSC 10383) (Pleurage anserina).